Consider the following 499-residue polypeptide: Ammonium transporter MEP2 (499 aa).

The Extracellular portion of the chain corresponds to 1–31 (MSYNFTGTPTGEGTGGNSLTTDLNTQFDLAN). The N-linked (GlcNAc...) asparagine glycan is linked to Asn4. Residues 32–52 (MGWIGVASAGVWIMVPGIGLL) form a helical membrane-spanning segment. Topologically, residues 53–62 (YSGLSRKKHA) are cytoplasmic. Residues 63–83 (LSLLWASMMASAVCIFQWFFW) form a helical membrane-spanning segment. Residues 84–122 (GYSLAFSHNTRGNGFIGTLEFFGFRNVLGAPSSVSSLPD) lie on the Extracellular side of the membrane. A helical transmembrane segment spans residues 123–143 (ILFAVYQGMFAAVTGALMLGG). Over 144 to 152 (ACERARLFP) the chain is Cytoplasmic. A helical transmembrane segment spans residues 153–173 (MMVFLFLWMTIVYCPIACWVW). Residues 174 to 187 (NAEGWLVKLGSLDY) are Extracellular-facing. A helical membrane pass occupies residues 188 to 208 (AGGLCVHLTSGHGGLVYALIL). Residues 209 to 230 (GKRNDPVTRKGMPKYKPHSVTS) lie on the Cytoplasmic side of the membrane. A helical transmembrane segment spans residues 231 to 251 (VVLGTVFLWFGWMFFNGGSAG). Residues 252 to 257 (NATIRA) are Extracellular-facing. The chain crosses the membrane as a helical span at residues 258–278 (WYSIMSTNLAAACGGLTWMVI). The Cytoplasmic segment spans residues 279–289 (DYFRCGRKWTT). The helical transmembrane segment at 290–312 (VGLCSGIIAGLVGITPAAGFVPI) threads the bilayer. Residues 313–315 (WSA) lie on the Extracellular side of the membrane. The chain crosses the membrane as a helical span at residues 316-338 (VVIGVVTGAGCNLAVDLKSLLRI). Topologically, residues 339–346 (DDGLDCYS) are cytoplasmic. A helical membrane pass occupies residues 347-367 (IHGVGGCIGSVLTGIFAADYV). The Extracellular segment spans residues 368–393 (NATAGSYISPIDGGWINHHYKQVGYQ). The helical transmembrane segment at 394–414 (LAGICAALAWTVTVTSILLLT) threads the bilayer. Over 415-499 (MNAIPFLKLR…SSTKNTDHIV (85 aa)) the chain is Cytoplasmic. The segment at 428-441 (DEEELGTDAAQIGE) is enhancer domain. The interval 442–449 (FTYEESTA) is linker domain. Residues 450–485 (YIPEPIRSKTSAQMPPPHENIDDKIVGNTDAEKNST) are autoinhibitory domain. The tract at residues 455–499 (IRSKTSAQMPPPHENIDDKIVGNTDAEKNSTPSDASSTKNTDHIV) is disordered. Ser457 is subject to Phosphoserine. A compositionally biased stretch (basic and acidic residues) spans 468–482 (ENIDDKIVGNTDAEK). The segment covering 483 to 493 (NSTPSDASSTK) has biased composition (polar residues).

It belongs to the ammonia transporter channel (TC 1.A.11.2) family. Post-translationally, phosphorylated at Ser-457 by the TORC1 effector kinase NPR1 under nitrogen-limiting conditions which causes a conformational change in the C-terminal region (CTR) to form an open active conformation. Supplementation of nitrogen source leads to inactivation and instant Ser-457 dephosphorylation via plasma membrane PSR1 and PSR2 redundant phosphatases. In terms of processing, the residue Asn-4 of the protein's N-terminal tail is the only site that is glycosylated.

Its subcellular location is the cell membrane. Transporter for ammonium (both charged and uncharged NH3 and NH4) to use as a nitrogen source. The affinity of MEP2 is about twenty times higher than that of MEP1. MEP3 has the lowest affinity. Under ammonium limitation acts as an ammonium sensor, generating a signal that leads to pseudohyphal (filamentous) growth. The sequence is that of Ammonium transporter MEP2 from Saccharomyces cerevisiae (strain ATCC 204508 / S288c) (Baker's yeast).